Here is a 371-residue protein sequence, read N- to C-terminus: 3-dehydroquinate synthase (371 aa).

Residues aspartate 70–lysine 75, glycine 104–aspartate 108, threonine 128–threonine 129, lysine 141, and lysine 150 contribute to the NAD(+) site. Zn(2+)-binding residues include glutamate 183, histidine 246, and histidine 262.

It belongs to the sugar phosphate cyclases superfamily. Dehydroquinate synthase family. The cofactor is Co(2+). It depends on Zn(2+) as a cofactor. Requires NAD(+) as cofactor.

It localises to the cytoplasm. It carries out the reaction 7-phospho-2-dehydro-3-deoxy-D-arabino-heptonate = 3-dehydroquinate + phosphate. It functions in the pathway metabolic intermediate biosynthesis; chorismate biosynthesis; chorismate from D-erythrose 4-phosphate and phosphoenolpyruvate: step 2/7. Catalyzes the conversion of 3-deoxy-D-arabino-heptulosonate 7-phosphate (DAHP) to dehydroquinate (DHQ). The chain is 3-dehydroquinate synthase from Saccharopolyspora erythraea (strain ATCC 11635 / DSM 40517 / JCM 4748 / NBRC 13426 / NCIMB 8594 / NRRL 2338).